Reading from the N-terminus, the 595-residue chain is Glutamyl-tRNA(Gln) amidotransferase subunit B, mitochondrial (595 aa).

The transit peptide at 1–114 directs the protein to the mitochondrion; that stretch reads MPRLWYSRYL…RAPTSTVAEP (114 aa). The disordered stretch occupies residues 59–78; that stretch reads KEEAKRSKSQSRNGRGKKQV.

It belongs to the GatB/GatE family. GatB subfamily. In terms of assembly, subunit of the heterotrimeric GatCAB amidotransferase (AdT) complex, composed of A, B and C subunits.

The protein localises to the mitochondrion. The enzyme catalyses L-glutamyl-tRNA(Gln) + L-glutamine + ATP + H2O = L-glutaminyl-tRNA(Gln) + L-glutamate + ADP + phosphate + H(+). In terms of biological role, allows the formation of correctly charged Gln-tRNA(Gln) through the transamidation of misacylated Glu-tRNA(Gln) in the mitochondria. The reaction takes place in the presence of glutamine and ATP through an activated gamma-phospho-Glu-tRNA(Gln). The sequence is that of Glutamyl-tRNA(Gln) amidotransferase subunit B, mitochondrial from Talaromyces stipitatus (strain ATCC 10500 / CBS 375.48 / QM 6759 / NRRL 1006) (Penicillium stipitatum).